The following is a 197-amino-acid chain: Protein RmlC homolog (197 aa).

H76 functions as the Proton acceptor in the catalytic mechanism. Residue Y140 is the Proton donor of the active site.

Functionally, could catalyze a 3,5-epimerization. The sequence is that of Protein RmlC homolog (rfbC) from Streptococcus pyogenes serotype M6 (strain ATCC BAA-946 / MGAS10394).